The chain runs to 98 residues: NADH-ubiquinone oxidoreductase chain 4L (98 aa).

Helical transmembrane passes span 1–21, 29–49, and 61–81; these read MSLIHINILMAFTMSLVGLLM, ALLCLEGMVLSLFILMTLTIL, and IILLVFAACEAAIGLALLVMV.

It belongs to the complex I subunit 4L family. In terms of assembly, core subunit of respiratory chain NADH dehydrogenase (Complex I) which is composed of 45 different subunits.

Its subcellular location is the mitochondrion inner membrane. It catalyses the reaction a ubiquinone + NADH + 5 H(+)(in) = a ubiquinol + NAD(+) + 4 H(+)(out). In terms of biological role, core subunit of the mitochondrial membrane respiratory chain NADH dehydrogenase (Complex I) which catalyzes electron transfer from NADH through the respiratory chain, using ubiquinone as an electron acceptor. Part of the enzyme membrane arm which is embedded in the lipid bilayer and involved in proton translocation. The chain is NADH-ubiquinone oxidoreductase chain 4L (MT-ND4L) from Phocoena phocoena (Harbor porpoise).